Reading from the N-terminus, the 215-residue chain is Cytidylate kinase (215 aa).

Residue 10–18 (GPAASGKGT) participates in ATP binding.

Belongs to the cytidylate kinase family. Type 1 subfamily.

It localises to the cytoplasm. It carries out the reaction CMP + ATP = CDP + ADP. The catalysed reaction is dCMP + ATP = dCDP + ADP. This is Cytidylate kinase from Bartonella quintana (strain Toulouse) (Rochalimaea quintana).